A 347-amino-acid polypeptide reads, in one-letter code: NADH-quinone oxidoreductase subunit H (347 aa).

The next 8 helical transmembrane spans lie at 13-33 (LIIA…VAYL), 82-102 (GVFL…WAVI), 115-135 (VGIL…IMGG), 161-181 (IGFV…TDIV), 198-218 (FLDW…ISAL), 248-268 (FLLF…LMTV), 286-306 (VPGI…FAMV), and 325-345 (VFLP…KVFG).

Belongs to the complex I subunit 1 family. As to quaternary structure, NDH-1 is composed of 14 different subunits. Subunits NuoA, H, J, K, L, M, N constitute the membrane sector of the complex.

The protein localises to the cell inner membrane. The catalysed reaction is a quinone + NADH + 5 H(+)(in) = a quinol + NAD(+) + 4 H(+)(out). Functionally, NDH-1 shuttles electrons from NADH, via FMN and iron-sulfur (Fe-S) centers, to quinones in the respiratory chain. The immediate electron acceptor for the enzyme in this species is believed to be ubiquinone. Couples the redox reaction to proton translocation (for every two electrons transferred, four hydrogen ions are translocated across the cytoplasmic membrane), and thus conserves the redox energy in a proton gradient. This subunit may bind ubiquinone. This Brucella melitensis biotype 1 (strain ATCC 23456 / CCUG 17765 / NCTC 10094 / 16M) protein is NADH-quinone oxidoreductase subunit H.